The chain runs to 483 residues: Probable 4-hydroxyphenylacetate 3-monooxygenase (483 aa).

Substrate-binding positions include 104-108 (RSPDY) and His150. FAD-binding positions include 150 to 152 (HTF), 156 to 159 (QVNR), and Thr193. Position 206–207 (206–207 (AP)) interacts with substrate. Residue 452 to 455 (DPIR) participates in FAD binding.

This sequence belongs to the FADH(2)-utilizing monooxygenase family.

It carries out the reaction 4-hydroxyphenylacetate + FADH2 + O2 = 3,4-dihydroxyphenylacetate + FAD + H2O + H(+). The protein operates within aromatic compound metabolism; 4-hydroxyphenylacetate degradation; pyruvate and succinate semialdehyde from 4-hydroxyphenylacetate: step 1/7. Its function is as follows. Catalyzes the hydroxylation of 4-hydroxyphenylacetic acid (4HPA), leading to the production of 3,4-dihydroxyphenylacetic acid (DHPA). The protein is Probable 4-hydroxyphenylacetate 3-monooxygenase (yoaI) of Bacillus subtilis (strain 168).